The sequence spans 114 residues: Large ribosomal subunit protein bL20c (114 aa).

The protein belongs to the bacterial ribosomal protein bL20 family.

The protein localises to the plastid. It is found in the chloroplast. In terms of biological role, binds directly to 23S ribosomal RNA and is necessary for the in vitro assembly process of the 50S ribosomal subunit. It is not involved in the protein synthesizing functions of that subunit. In Tetradesmus obliquus (Green alga), this protein is Large ribosomal subunit protein bL20c.